A 461-amino-acid polypeptide reads, in one-letter code: Protein transport protein HofB homolog (461 aa).

222-229 (GPTGSGKT) is a binding site for ATP.

This sequence belongs to the GSP E family.

This is Protein transport protein HofB homolog (hofB) from Escherichia coli (strain K12).